Here is a 251-residue protein sequence, read N- to C-terminus: MAVHLLIVDALNLIRRIHAVQGSPCVETCQHALDQLIMHSQPTHAVAVFDDENRSSGWRHQRLPDYKAGRPPMPEELHNEMPALRAAFEQRGVPCWSASGNEADDLAATLAVKVTQAGHQATIVSTDKGYCQLLSPTLRIRDYFQKRWLDAPFIDKEFGVQPQQLPDYWGLAGISSSKVPGVAGIGPKSATQLLVEFQSLEGIYENLDAVAEKWRKKLETHKEMAFLCRDIARLQTDLHIDGNLQQLRLVR.

Residue Asp104 coordinates Mg(2+). In terms of domain architecture, 5'-3' exonuclease spans 160 to 249 (VQPQQLPDYW…IDGNLQQLRL (90 aa)). K(+) contacts are provided by Leu171, Ala172, Pro180, Val182, and Ile185. An interaction with DNA region spans residues 184–189 (GIGPKS).

Belongs to the Xni family. Mg(2+) serves as cofactor. It depends on K(+) as a cofactor.

Functionally, has flap endonuclease activity. During DNA replication, flap endonucleases cleave the 5'-overhanging flap structure that is generated by displacement synthesis when DNA polymerase encounters the 5'-end of a downstream Okazaki fragment. In Escherichia coli O45:K1 (strain S88 / ExPEC), this protein is Flap endonuclease Xni.